The primary structure comprises 356 residues: Probable cysteine protease RDL6 (356 aa).

An N-terminal signal peptide occupies residues 1–26; it reads MGFVRPVCMTILFLLIVFVLSAPSSA. A propeptide spans 27–132 (activation peptide); sequence MDLPATSGGH…RRYVPLAGDQ (106 aa). N-linked (GlcNAc...) asparagine glycans are attached at residues N37 and N86. 3 cysteine pairs are disulfide-bonded: C154/C195, C188/C229, and C288/C339. C157 is a catalytic residue. Active-site residues include H294 and N314.

Belongs to the peptidase C1 family.

In terms of biological role, probable thiol protease. This Arabidopsis thaliana (Mouse-ear cress) protein is Probable cysteine protease RDL6.